A 254-amino-acid polypeptide reads, in one-letter code: PHD finger protein ALFIN-LIKE 8 (254 aa).

The tract at residues 137 to 194 (GTAKKQSKEKTPKTSGKSNKSGTKPSRQPEPNSRGPKMPPPKDEDDSGGEEEEEEEDH) is disordered. Residues 149–162 (KTSGKSNKSGTKPS) show a composition bias toward low complexity. A compositionally biased stretch (acidic residues) spans 179 to 194 (DEDDSGGEEEEEEEDH). The PHD-type zinc-finger motif lies at 196–248 (NTLCGACGDNYGQDEFWICCDACETWFHGKCVKITPAKAEHIKHYKCPNCSSS).

The protein belongs to the Alfin family. In terms of assembly, interacts with H3K4me3 and to a lesser extent with H3K4me2.

The protein localises to the nucleus. Histone-binding component that specifically recognizes H3 tails trimethylated on 'Lys-4' (H3K4me3), which mark transcription start sites of virtually all active genes. The protein is PHD finger protein ALFIN-LIKE 8 of Oryza sativa subsp. japonica (Rice).